A 117-amino-acid chain; its full sequence is Large ribosomal subunit protein uL18 (117 aa).

Belongs to the universal ribosomal protein uL18 family. In terms of assembly, part of the 50S ribosomal subunit; part of the 5S rRNA/L5/L18/L25 subcomplex. Contacts the 5S and 23S rRNAs.

Functionally, this is one of the proteins that bind and probably mediate the attachment of the 5S RNA into the large ribosomal subunit, where it forms part of the central protuberance. In Aliivibrio fischeri (strain ATCC 700601 / ES114) (Vibrio fischeri), this protein is Large ribosomal subunit protein uL18.